Reading from the N-terminus, the 283-residue chain is uncharacterized protein (283 aa).

Positions 172 to 270 constitute an HTH araC/xylS-type domain; that stretch reads EAIRDYIDER…ERSPSEYRRQ (99 aa). 2 DNA-binding regions (H-T-H motif) span residues 189 to 210 and 237 to 260; these read ESVAQAFYISPNYLSHLFQKTG and VKEVAHACGFVDSNYFCRLFRKNT.

This is an uncharacterized protein from Escherichia coli (strain K12).